The chain runs to 381 residues: Alkanesulfonate monooxygenase (381 aa).

This sequence belongs to the SsuD family. Homotetramer.

It catalyses the reaction an alkanesulfonate + FMNH2 + O2 = an aldehyde + FMN + sulfite + H2O + 2 H(+). Its function is as follows. Catalyzes the desulfonation of aliphatic sulfonates. The sequence is that of Alkanesulfonate monooxygenase from Escherichia coli O8 (strain IAI1).